We begin with the raw amino-acid sequence, 376 residues long: MAEERPGAWFGFGFCGFGQELGSGRGRQVHSPSPLRAGVDICRVSASWSYTAFVTRGGRLELSGSASGAAGRCKDAWASEGLLAVLRAGPGPEALLQVWAAESALRGEPLWAQNVVPEAEGEDDPAGEAQAGRLPLLPCARAYVSPRAPFYRPLAPELRARQLELGAEHALLLDAAGQVFSWGGGRHGQLGHGTLEAELEPRLLEALQGLVMAEVAAGGWHSVCVSETGDIYIWGWNESGQLALPTRNLAEDGETVAREATELNEDGSQVKRTGGAEDGAPAPFIAVQPFPALLDLPMGSDAVKASCGSRHTAVVTRTGELYTWGWGKYGQLGHEDTTSLDRPRRVEYFVDKQLQVKAVTCGPWNTYVYAVEKGKS.

The interval 1–169 (MAEERPGAWF…ARQLELGAEH (169 aa)) is interaction with KDM8. Residues 6–56 (PGAWFGFGFCGFGQELGSGRGRQVHSPSPLRAGVDICRVSASWSYTAFVTR) form an RCC1 1 repeat. Arg141 is modified ((3R)-3-hydroxyarginine). RCC1 repeat units follow at residues 176-227 (AGQV…CVSE), 229-317 (GDIY…VVTR), and 318-371 (TGEL…VYAV).

In terms of assembly, found in a complex with KDM8. Interacts (via N-terminus) with KDM8 (via N-terminus). Post-translationally, specifically hydroxylated (with R stereochemistry) at C-3 of ARG-141 by KDM8.

The protein resides in the chromosome. Its function is as follows. Plays a role in transcriptional repression of satellite repeats, possibly by regulating H3K36 methylation levels in centromeric regions together with KDM8. Possibly together with KDM8, is involved in proper mitotic spindle organization and chromosome segregation. Plays a role in regulating alpha-tubulin deacetylation and cytoskeletal microtubule stability, thereby promoting cell migration and TGF-beta-induced epithelial to mesenchymal transition (EMT), potentially through the inhibition of KDM8. This is RCC1 domain-containing protein 1 from Homo sapiens (Human).